A 534-amino-acid polypeptide reads, in one-letter code: Probable glycine dehydrogenase (decarboxylating) subunit 2 (534 aa).

Lysine 273 carries the N6-(pyridoxal phosphate)lysine modification.

This sequence belongs to the GcvP family. C-terminal subunit subfamily. The glycine cleavage system is composed of four proteins: P, T, L and H. In this organism, the P 'protein' is a heterodimer of two subunits. It depends on pyridoxal 5'-phosphate as a cofactor.

It catalyses the reaction N(6)-[(R)-lipoyl]-L-lysyl-[glycine-cleavage complex H protein] + glycine + H(+) = N(6)-[(R)-S(8)-aminomethyldihydrolipoyl]-L-lysyl-[glycine-cleavage complex H protein] + CO2. Its function is as follows. The glycine cleavage system catalyzes the degradation of glycine. The P protein binds the alpha-amino group of glycine through its pyridoxal phosphate cofactor; CO(2) is released and the remaining methylamine moiety is then transferred to the lipoamide cofactor of the H protein. The chain is Probable glycine dehydrogenase (decarboxylating) subunit 2 from Bacillus cereus (strain ATCC 14579 / DSM 31 / CCUG 7414 / JCM 2152 / NBRC 15305 / NCIMB 9373 / NCTC 2599 / NRRL B-3711).